The sequence spans 354 residues: Uroporphyrinogen decarboxylase (354 aa).

Substrate contacts are provided by residues 30–34 (RQAGR), Asp-79, Tyr-154, Ser-209, and His-333.

It belongs to the uroporphyrinogen decarboxylase family. As to quaternary structure, homodimer.

The protein resides in the cytoplasm. It carries out the reaction uroporphyrinogen III + 4 H(+) = coproporphyrinogen III + 4 CO2. It functions in the pathway porphyrin-containing compound metabolism; protoporphyrin-IX biosynthesis; coproporphyrinogen-III from 5-aminolevulinate: step 4/4. Functionally, catalyzes the decarboxylation of four acetate groups of uroporphyrinogen-III to yield coproporphyrinogen-III. The sequence is that of Uroporphyrinogen decarboxylase from Mycobacterium sp. (strain JLS).